The primary structure comprises 124 residues: Small ribosomal subunit protein bS6 (124 aa).

Positions 96-124 are disordered; the sequence is ETAPSPMMKEVQREEARKAAQTTTEGQAA. Residues 115-124 are compositionally biased toward polar residues; sequence AQTTTEGQAA.

It belongs to the bacterial ribosomal protein bS6 family.

Its function is as follows. Binds together with bS18 to 16S ribosomal RNA. The sequence is that of Small ribosomal subunit protein bS6 from Cupriavidus pinatubonensis (strain JMP 134 / LMG 1197) (Cupriavidus necator (strain JMP 134)).